Consider the following 182-residue polypeptide: Large ribosomal subunit protein uL5 (182 aa).

It belongs to the universal ribosomal protein uL5 family. In terms of assembly, part of the 50S ribosomal subunit; part of the 5S rRNA/L5/L18/L25 subcomplex. Contacts the 5S rRNA and the P site tRNA. Forms a bridge to the 30S subunit in the 70S ribosome.

This is one of the proteins that bind and probably mediate the attachment of the 5S RNA into the large ribosomal subunit, where it forms part of the central protuberance. In the 70S ribosome it contacts protein S13 of the 30S subunit (bridge B1b), connecting the 2 subunits; this bridge is implicated in subunit movement. Contacts the P site tRNA; the 5S rRNA and some of its associated proteins might help stabilize positioning of ribosome-bound tRNAs. The sequence is that of Large ribosomal subunit protein uL5 from Borrelia turicatae (strain 91E135).